The sequence spans 307 residues: MPRSFLVKKIKGDGFQCSGVPAPTYHPLETAYVLPGARGPPGDNGYAPHRLPPSSYDADQKPGLELAPAEPAYPPAAPEEYSDPESPQSSLSARYFRGEAAVTDSYSMDAFFISDGRSRRRRGGGGGDAGGSGDAGGAGGRAGRAGAQAGGGHRHACAECGKTYATSSNLSRHKQTHRSLDSQLARKCPTCGKAYVSMPALAMHLLTHNLRHKCGVCGKAFSRPWLLQGHMRSHTGEKPFGCAHCGKAFADRSNLRAHMQTHSAFKHYRCRQCDKSFALKSYLHKHCEAACAKAAEPPPPTPAGPAS.

The segment at 1–20 (MPRSFLVKKIKGDGFQCSGV) is SNAG domain. Disordered regions lie at residues 34–90 (LPGA…PQSS) and 116–148 (GRSR…AGAQ). Residues 124-148 (GGGGDAGGSGDAGGAGGRAGRAGAQ) show a composition bias toward gly residues. 4 consecutive C2H2-type zinc fingers follow at residues 155–177 (HACA…KQTH), 186–208 (RKCP…LLTH), 212–234 (HKCG…MRSH), and 240–262 (FGCA…MQTH). The C2H2-type 5; atypical zinc finger occupies 268–291 (YRCRQCDKSFALKSYLHKHCEAAC).

This sequence belongs to the snail C2H2-type zinc-finger protein family.

Its subcellular location is the nucleus. Its function is as follows. May be involved in transcriptional regulation. This chain is Transcriptional repressor scratch 2 (SCRT2), found in Homo sapiens (Human).